Consider the following 239-residue polypeptide: MNGPWTEWDHVLKVDPDKPLVDGETFEDVCQTGTDAIEIGGTLDITTEKMQEVVDACSRYDMPLYQEPSNPAVVVESDALDGYLVPTVFNAESAFWVAGAHKEWVRIDGPLDWERTATEAYIVLNPDASVAEVTEANTDQTAEDVAAFATVAERLFGQEIIYIEYSGTFGDTKKVAAAAAALTESTLFYGGGIGGYDSAYEMGAHADTIVVGDLLHDEGVDAVSETVAGVKDAHADGEI.

Position 13 (K13) interacts with sn-glycerol 1-phosphate. Positions 15 and 42 each coordinate Mg(2+). Sn-glycerol 1-phosphate is bound by residues 162 to 167 (YIEYSG), G192, and 212 to 213 (GD).

It belongs to the GGGP/HepGP synthase family. Group I subfamily. The cofactor is Mg(2+).

The protein resides in the cytoplasm. It catalyses the reaction sn-glycerol 1-phosphate + (2E,6E,10E)-geranylgeranyl diphosphate = sn-3-O-(geranylgeranyl)glycerol 1-phosphate + diphosphate. It participates in membrane lipid metabolism; glycerophospholipid metabolism. Prenyltransferase that catalyzes the transfer of the geranylgeranyl moiety of geranylgeranyl diphosphate (GGPP) to the C3 hydroxyl of sn-glycerol-1-phosphate (G1P). This reaction is the first ether-bond-formation step in the biosynthesis of archaeal membrane lipids. In Haloquadratum walsbyi (strain DSM 16790 / HBSQ001), this protein is Geranylgeranylglyceryl phosphate synthase.